A 176-amino-acid chain; its full sequence is Large ribosomal subunit protein uL10 (176 aa).

This sequence belongs to the universal ribosomal protein uL10 family. Part of the ribosomal stalk of the 50S ribosomal subunit. The N-terminus interacts with L11 and the large rRNA to form the base of the stalk. The C-terminus forms an elongated spine to which L12 dimers bind in a sequential fashion forming a multimeric L10(L12)X complex.

Functionally, forms part of the ribosomal stalk, playing a central role in the interaction of the ribosome with GTP-bound translation factors. The polypeptide is Large ribosomal subunit protein uL10 (rplJ) (Streptomyces antibioticus).